Consider the following 383-residue polypeptide: Glutaminyl-peptide cyclotransferase-like protein (383 aa).

A helical transmembrane segment spans residues 33 to 53; that stretch reads VQFLPLLLLALAMGLAFYIVW. Cys168 and Cys192 are disulfide-bonded. A Zn(2+)-binding site is contributed by Asp187. The active-site Proton acceptor is Glu226. Glu227 is a Zn(2+) binding site. Asp270 acts as the Proton acceptor in catalysis. His352 is a binding site for Zn(2+).

Belongs to the glutaminyl-peptide cyclotransferase family. In terms of tissue distribution, detected in thalamus, hippocampus, brain cortex, cerebellum, kidney, lung and liver, and at low levels in heart and spleen.

The protein localises to the golgi apparatus membrane. It carries out the reaction N-terminal L-glutaminyl-[peptide] = N-terminal 5-oxo-L-prolyl-[peptide] + NH4(+). In terms of biological role, responsible for the biosynthesis of pyroglutamyl peptides. In Mus musculus (Mouse), this protein is Glutaminyl-peptide cyclotransferase-like protein (Qpctl).